Consider the following 370-residue polypeptide: TD and POZ domain-containing protein 4 (370 aa).

An MATH domain is found at Lys19–Val149. The 64-residue stretch at Thr188–Val251 folds into the BTB domain.

The protein belongs to the Tdpoz family.

The sequence is that of TD and POZ domain-containing protein 4 from Mus musculus (Mouse).